A 663-amino-acid polypeptide reads, in one-letter code: MSLARTILWLSRPLRPAHSLCRAQFMERKAQKPPSPPAMENGTRSWEERPPADPVATVTEGAAKIVFPSANEVFYNPVQEFNRDLTCAVITEFARIHLGAKGIQIKVPGEKDSEKIAVDLSDQEEETAGKNENLAPGDWPRTAAVGEICEEGLRVLEGLAASGLRSIRFALEVPGLQSVVANDASARAVELMHRNVELNGVAHLVQPNQADARMLMYQHQKAPERFDVIDLDPYGSPAPFLDAAVQAVSDGGLLCVTCTDMAVLAGNSGETCYSKYGAMALKSRACHEMALRIVLHSLDLHANCYQRYIVPLLSISADFYIRVFVRVFTGQAKVKSSASKQALVFQCVGCGAFYLQRLGKASGDPGGRIKFSAACGPPVTPECEHCGQRHQLGGPMWAEPIHDLDFVGRVLDAVTTNPGRFHTSMRIQGVLSVVTEELPDVPLYYTLDQLSSTIHCNTPRLLQLRSALLHAGFRVSLSHACKNAVKTDAPPEALWDIMRCWEKECPVKRERLSESSPAFRILAVEPRLKANFNIREDANPSSRQRGLKRFQANPEANWGPRPRARPGGKAASEDLAGRRRLLQNKRKEPAEDPAQRAARLKTFPCKRFKEGTCQLGDQCCYSHSPAAPVASGDIPIEECPETTTKISPGPKAAAGGIPGPGVD.

Residues 1–16 (MSLARTILWLSRPLRP) constitute a mitochondrion transit peptide. A Trm1 methyltransferase domain is found at 56–498 (ATVTEGAAKI…APPEALWDIM (443 aa)). S-adenosyl-L-methionine is bound at residue arginine 83. The residue at position 121 (serine 121) is a Phosphoserine. S-adenosyl-L-methionine is bound by residues arginine 165 and aspartate 183. Zn(2+)-binding residues include cysteine 347, cysteine 350, cysteine 383, and cysteine 386. Serine 516 is subject to Phosphoserine. The disordered stretch occupies residues 534–574 (IREDANPSSRQRGLKRFQANPEANWGPRPRARPGGKAASED). A Nuclear localization signal motif is present at residues 540 to 572 (PSSRQRGLKRFQANPEANWGPRPRARPGGKAAS). The C3H1-type zinc finger occupies 599–626 (RLKTFPCKRFKEGTCQLGDQCCYSHSPA). The residue at position 624 (serine 624) is a Phosphoserine. The tract at residues 632–663 (GDIPIEECPETTTKISPGPKAAAGGIPGPGVD) is disordered.

It belongs to the class I-like SAM-binding methyltransferase superfamily. Trm1 family.

It is found in the mitochondrion. The protein resides in the nucleus. The protein localises to the cytoplasm. It catalyses the reaction guanosine(26) in tRNA + 2 S-adenosyl-L-methionine = N(2)-dimethylguanosine(26) in tRNA + 2 S-adenosyl-L-homocysteine + 2 H(+). Dimethylates a single guanine residue at position 26 of most nuclear- and mitochondrial-encoded tRNAs using S-adenosyl-L-methionine as donor of the methyl groups. tRNA guanine(26)-dimethylation is required for redox homeostasis and ensure proper cellular proliferation and oxidative stress survival. The chain is tRNA (guanine(26)-N(2))-dimethyltransferase from Mus musculus (Mouse).